The sequence spans 274 residues: uncharacterized protein (274 aa).

Positions 1–17 are enriched in low complexity; that stretch reads MTQLTNFSESFSNQNSN. Disordered regions lie at residues 1–38 and 222–274; these read MTQL…YYVR and ELGT…MEFE. A compositionally biased stretch (polar residues) spans 18–28; it reads LHQPYNFNSHQ. Basic and acidic residues predominate over residues 29–38; it reads PPEENHYYVR. Composition is skewed to polar residues over residues 239 to 249 and 256 to 265; these read PMASPTGSSQI and SPNSLTNGSV.

This is an uncharacterized protein from Caenorhabditis elegans.